The primary structure comprises 258 residues: MSFIKPIYQDINSILIGQKVKRPKSGTLSGHAAGEPFEKLVYKFLKENLSDLTFKQYEYLNDLFMKNPAIIGHEARYKLFNSPTLLFLLSRGKAATENWSIENLFEEKQNDTADILLVKDQFYELLDVKRRNISKSAQAPNIISAYKLAQTCAKMIDNKEFDLFDINYLEVDSELNGEDLVCVSTSFAELFKSEPSELYINWAAAMQIQFHVRDLDQGFNGTREEWAKSYLKHFVTQAEQRAISMIDKFVKPFKKYIL.

The enzyme catalyses Endonucleolytic cleavage of DNA to give specific double-stranded fragments with terminal 5'-phosphates.. Its function is as follows. A P subtype restriction enzyme that recognizes the double-stranded sequence 5'-GTYRAC-3' and cleaves after Y-3. In Haemophilus influenzae, this protein is Type II restriction enzyme HincII (hincIIR).